The chain runs to 578 residues: MNKKYFKKYSWVLILSTSILAPMTLASCNHNVAKKEDKTQNDSSNLSNKTNKSDPNDHLKDKDKNVSQDNKDSTNKAVSNENSQTQSQKTNESSQNTKDDSSKTSNLITNQNSSSNTKSKIQENKQSQKDQNTSAVNVSALEKQTKNDENISLVNSKDTNVILKNDEKVALAKDDSKEKSKNSSNLNLKTPVENRQNKNEVKDDKKALQWWQKLNESASILESFSYDQTSLSLTFKEGMPLGLEVVLKLENLDSHEEKEISFKTTNGKVQNVLLTSSNLTSGKWKIKSFSFDKTYSHSPTIETTFDFKTNEKLKQERIEKIQKAIDKYQIKIKQNYKDKPLISKYALSNFDLNLNFKDLEIVNNSLKFDGSNLNQDLKSEKQMKITFEKVSENQANKTRKAHFKITTLDNLVFEKTLEWSYKTNKEYLDEFKNGSALWDDLQASLTSVFEKSLWHPYQLPKAKSKINTINLINDVSASFQGYDYLDDFNGSAKLKFKLQRGQEQRDITFTINGFLKVSLIDPLYKGNLRNSEFDVKASSNGYWLGQYYTAAEVFKHYSNGKSYWYATANDGNPWLEFS.

Residues methionine 1–serine 27 form the signal peptide. A lipid anchor (N-palmitoyl cysteine) is attached at cysteine 28. Cysteine 28 carries the S-diacylglycerol cysteine lipid modification. 2 disordered regions span residues lysine 35–alanine 135 and alanine 172–aspartate 203. The segment covering asparagine 41 to threonine 50 has biased composition (polar residues). Basic and acidic residues predominate over residues asparagine 51 to threonine 74. The segment covering asparagine 75–asparagine 96 has biased composition (polar residues). Positions isoleucine 108–serine 119 are enriched in low complexity. Over residues alanine 172–lysine 181 the composition is skewed to basic and acidic residues.

This sequence belongs to the M.pulmonis LipAB lipoprotein family.

The protein resides in the cell membrane. In Mycoplasmopsis pulmonis (strain UAB CTIP) (Mycoplasma pulmonis), this protein is Lipoprotein A (lipA).